The sequence spans 469 residues: RNA-editing ligase 1, mitochondrial (469 aa).

The transit peptide at 1–44 (MQLQRLGAPLLKRLVGGCIRQSTAPIMPCVVVSGSGVFLTPVRT) directs the protein to the mitochondrion. Residues 59 to 61 (IEI), 86 to 92 (EKVHGTN), R111, E159, F209, and 307 to 309 (KLR) contribute to the ATP site. Catalysis depends on K87, which acts as the N6-AMP-lysine intermediate. The tract at residues 450-469 (AAAQSEAIPPLSPAAPTKGE) is disordered.

Belongs to the RNA ligase 2 family. In terms of assembly, component of the RNA editing complex (editosome), a 1600 kDa complex composed of at least 20 proteins. Interacts with terminal uridylyltransferase MEAT1.

It localises to the mitochondrion. It carries out the reaction ATP + (ribonucleotide)n-3'-hydroxyl + 5'-phospho-(ribonucleotide)m = (ribonucleotide)n+m + AMP + diphosphate.. In terms of biological role, essential for RNA editing. RNA editing in kinetoplastid mitochondria inserts and deletes uridylates at multiple sites in pre-mRNAs as directed by guide RNAs. The chain is RNA-editing ligase 1, mitochondrial (REL1) from Trypanosoma brucei brucei.